Consider the following 273-residue polypeptide: Acetyl-coenzyme A carboxylase carboxyl transferase subunit alpha (273 aa).

The CoA carboxyltransferase C-terminal domain maps to 1 to 244 (MKKATQSKAW…KVVLKQALDE (244 aa)).

This sequence belongs to the AccA family. Acetyl-CoA carboxylase is a heterohexamer composed of biotin carboxyl carrier protein (AccB), biotin carboxylase (AccC) and two subunits each of ACCase subunit alpha (AccA) and ACCase subunit beta (AccD).

The protein localises to the cytoplasm. It carries out the reaction N(6)-carboxybiotinyl-L-lysyl-[protein] + acetyl-CoA = N(6)-biotinyl-L-lysyl-[protein] + malonyl-CoA. It functions in the pathway lipid metabolism; malonyl-CoA biosynthesis; malonyl-CoA from acetyl-CoA: step 1/1. Functionally, component of the acetyl coenzyme A carboxylase (ACC) complex. First, biotin carboxylase catalyzes the carboxylation of biotin on its carrier protein (BCCP) and then the CO(2) group is transferred by the carboxyltransferase to acetyl-CoA to form malonyl-CoA. This is Acetyl-coenzyme A carboxylase carboxyl transferase subunit alpha from Acinetobacter baumannii (strain AB0057).